We begin with the raw amino-acid sequence, 271 residues long: Cyanophycinase (271 aa).

Active-site charge relay system residues include Ser132, His174, and Glu201.

The protein belongs to the peptidase S51 family. Homodimer.

The catalysed reaction is [L-4-(L-arginin-2-N-yl)aspartate](n) + H2O = [L-4-(L-arginin-2-N-yl)aspartate](n-1) + L-4-(L-arginin-2-N-yl)aspartate. Exopeptidase that catalyzes the hydrolytic cleavage of multi-L-arginyl-poly-L-aspartic acid (cyanophycin; a water-insoluble reserve polymer) into aspartate-arginine dipeptides. The protein is Cyanophycinase (cphB) of Synechocystis sp. (strain ATCC 27184 / PCC 6803 / Kazusa).